The sequence spans 466 residues: Cysteine--tRNA ligase (466 aa).

Position 27 (Cys-27) interacts with Zn(2+). The 'HIGH' region signature appears at 29-39 (PTVYNYIHIGN). Zn(2+) is bound by residues Cys-207, His-232, and Glu-236. The 'KMSKS' region motif lies at 264 to 268 (KMSKS). Lys-267 is an ATP binding site.

The protein belongs to the class-I aminoacyl-tRNA synthetase family. In terms of assembly, monomer. The cofactor is Zn(2+).

Its subcellular location is the cytoplasm. The enzyme catalyses tRNA(Cys) + L-cysteine + ATP = L-cysteinyl-tRNA(Cys) + AMP + diphosphate. This is Cysteine--tRNA ligase from Thermoanaerobacter pseudethanolicus (strain ATCC 33223 / 39E) (Clostridium thermohydrosulfuricum).